Reading from the N-terminus, the 33-residue chain is Protamine-1B (33 aa).

The disordered stretch occupies residues 1 to 33 (PRRRRRRSSSRPIRRRRPRRVSRRRRRGGRRRR).

As to expression, testis.

The protein resides in the nucleus. It localises to the chromosome. Functionally, protamines substitute for histones in the chromatin of sperm during the haploid phase of spermatogenesis. They compact sperm DNA into a highly condensed, stable and inactive complex. In Oncorhynchus mykiss (Rainbow trout), this protein is Protamine-1B.